We begin with the raw amino-acid sequence, 397 residues long: Succinate--CoA ligase [ADP-forming] subunit beta (397 aa).

Residues 9-254 enclose the ATP-grasp domain; that stretch reads KALLKGYGAP…ETEEDAKEIE (246 aa). ATP is bound by residues lysine 46, 53-55, glutamate 109, alanine 112, and glutamate 117; that span reads GRG. Mg(2+) contacts are provided by asparagine 209 and aspartate 223. Substrate contacts are provided by residues asparagine 274 and 331-333; that span reads GIM.

The protein belongs to the succinate/malate CoA ligase beta subunit family. In terms of assembly, heterotetramer of two alpha and two beta subunits. Requires Mg(2+) as cofactor.

The enzyme catalyses succinate + ATP + CoA = succinyl-CoA + ADP + phosphate. The catalysed reaction is GTP + succinate + CoA = succinyl-CoA + GDP + phosphate. The protein operates within carbohydrate metabolism; tricarboxylic acid cycle; succinate from succinyl-CoA (ligase route): step 1/1. In terms of biological role, succinyl-CoA synthetase functions in the citric acid cycle (TCA), coupling the hydrolysis of succinyl-CoA to the synthesis of either ATP or GTP and thus represents the only step of substrate-level phosphorylation in the TCA. The beta subunit provides nucleotide specificity of the enzyme and binds the substrate succinate, while the binding sites for coenzyme A and phosphate are found in the alpha subunit. The polypeptide is Succinate--CoA ligase [ADP-forming] subunit beta (Rhizobium leguminosarum bv. trifolii (strain WSM2304)).